Reading from the N-terminus, the 111-residue chain is uncharacterized protein (111 aa).

3 helical membrane passes run 4 to 23 (LHQVLIACVIGGIMGILGHV), 39 to 61 (IYLGFLEDWFIGMTASILLVLSA), and 65 to 84 (SGIQLVILSIISGYGGEAVL).

It is found in the cell membrane. This is an uncharacterized protein from Bacillus subtilis (strain 168).